The sequence spans 187 residues: Adenylate kinase (187 aa).

Residue 10–15 (GSGKGT) coordinates ATP. The tract at residues 30–59 (STGDLLRAEVAAGSPLGVKAKEVMARGDLV) is NMP. Residues Thr31, Arg36, 57–59 (DLV), 85–88 (GYPR), and Gln92 each bind AMP. The tract at residues 126-136 (GRAKAEGREDD) is LID. Arg127 provides a ligand contact to ATP. AMP-binding residues include Arg133 and Arg144. Residue Gly172 coordinates ATP.

It belongs to the adenylate kinase family. Monomer.

The protein resides in the cytoplasm. The enzyme catalyses AMP + ATP = 2 ADP. The protein operates within purine metabolism; AMP biosynthesis via salvage pathway; AMP from ADP: step 1/1. Catalyzes the reversible transfer of the terminal phosphate group between ATP and AMP. Plays an important role in cellular energy homeostasis and in adenine nucleotide metabolism. This is Adenylate kinase from Xanthomonas campestris pv. campestris (strain B100).